Consider the following 807-residue polypeptide: Glycerol-3-phosphate acyltransferase (807 aa).

An HXXXXD motif motif is present at residues 308 to 313 (CHRSHM).

Belongs to the GPAT/DAPAT family.

It localises to the cell inner membrane. It catalyses the reaction sn-glycerol 3-phosphate + an acyl-CoA = a 1-acyl-sn-glycero-3-phosphate + CoA. It participates in phospholipid metabolism; CDP-diacylglycerol biosynthesis; CDP-diacylglycerol from sn-glycerol 3-phosphate: step 1/3. The chain is Glycerol-3-phosphate acyltransferase from Shewanella sp. (strain ANA-3).